A 379-amino-acid polypeptide reads, in one-letter code: Cytochrome b (379 aa).

The next 4 helical transmembrane spans lie at 33 to 53 (FGSL…FLAM), 77 to 98 (WLIR…FIHV), 113 to 133 (WNIG…GYVL), and 178 to 198 (FFAF…VHLL). Heme b contacts are provided by H83 and H97. Residues H182 and H196 each contribute to the heme b site. H201 is a binding site for a ubiquinone. The next 4 helical transmembrane spans lie at 226 to 246 (IKDL…ALFF), 288 to 308 (LGGV…PLLN), 320 to 340 (ITQT…WIGG), and 347 to 367 (FTTI…IIMP).

It belongs to the cytochrome b family. In terms of assembly, the cytochrome bc1 complex contains 11 subunits: 3 respiratory subunits (MT-CYB, CYC1 and UQCRFS1), 2 core proteins (UQCRC1 and UQCRC2) and 6 low-molecular weight proteins (UQCRH/QCR6, UQCRB/QCR7, UQCRQ/QCR8, UQCR10/QCR9, UQCR11/QCR10 and a cleavage product of UQCRFS1). This cytochrome bc1 complex then forms a dimer. The cofactor is heme b.

It localises to the mitochondrion inner membrane. In terms of biological role, component of the ubiquinol-cytochrome c reductase complex (complex III or cytochrome b-c1 complex) that is part of the mitochondrial respiratory chain. The b-c1 complex mediates electron transfer from ubiquinol to cytochrome c. Contributes to the generation of a proton gradient across the mitochondrial membrane that is then used for ATP synthesis. This chain is Cytochrome b (MT-CYB), found in Deltamys kempi (Kemp's grass mouse).